The following is a 206-amino-acid chain: Endoribonuclease YbeY (206 aa).

Residues 1–20 are disordered; that stretch reads MSQANHNDTHNNIDDNINNH. 3 residues coordinate Zn(2+): H168, H172, and H178.

The protein belongs to the endoribonuclease YbeY family. Zn(2+) is required as a cofactor.

The protein localises to the cytoplasm. In terms of biological role, single strand-specific metallo-endoribonuclease involved in late-stage 70S ribosome quality control and in maturation of the 3' terminus of the 16S rRNA. This is Endoribonuclease YbeY from Psychrobacter arcticus (strain DSM 17307 / VKM B-2377 / 273-4).